We begin with the raw amino-acid sequence, 536 residues long: MEITNPILTGFNPDPSLCRQGEDYYIATSTFEWFPGVRIYHSRDLKNWSLVSTPLDRVSMLDMKGNPDSGGIWAPCLSYADGKFWLLYTDVKIVDSPWKNGRNFLVTAPSIEGPWSEPIPMGNGGFDPSLFHDDDGRKYYIYRPWGPRHHSNPHNTIVLQAFDPQTGTLSPERKTLFTGTPLCYTEGAHLYRHAGWYYLMAAEGGTSYEHAVVVLRSKNIDGPYELHPDVTMMTSWHLPENPLQKSGHGSLLQTHTGEWYMAYLTSRPLRLPGVPLLASGGRGYCPLGRETGIARIEWRDGWPYVEGGKHAQLTVKGPQVAEQPAAVPGNWRDDFDASSLDPELQTLRIPFDDTLGSLTARPGFLRLYGNDSLNSTFTQSTVARRWQHFAFRAETRMEFSPVHFQQSAGLTCYYNSKNWSYCFVDYEEGQGRTIKVIQLDHNVPSWPLHEQPIPVPEHAESVWLRVDVDTLVYRYSYSFDGETWHTVPVTYEAWKLSDDYIGGRGFFTGAFVGLHCEDISGDGCYADFDYFTYEPV.

Catalysis depends on aspartate 14, which acts as the Proton acceptor. The active-site Proton donor is glutamate 186.

The protein belongs to the glycosyl hydrolase 43 family.

The catalysed reaction is Hydrolysis of (1-&gt;4)-beta-D-xylans, to remove successive D-xylose residues from the non-reducing termini.. This Escherichia coli (strain K12) protein is Putative beta-xylosidase (yagH).